Consider the following 586-residue polypeptide: MFS-type transporter ucsD (586 aa).

A disordered region spans residues 1–56 (MSRNSGTTLEDGPLHADPTTEAPNNATVTTNVTANDENTEKEVDADAAAAAPAEAP). Composition is skewed to low complexity over residues 19 to 36 (TTEA…TAND) and 46 to 56 (DAAAAAPAEAP). 2 N-linked (GlcNAc...) asparagine glycosylation sites follow: N25 and N31. 8 helical membrane-spanning segments follow: residues 65–85 (WAIV…GTII), 101–121 (SFIW…PLMA), 131–151 (WLTL…GGAN), 164–184 (GFGG…LVPL), 192–212 (GIVQ…GGLL), 220–240 (WVFY…FFFL), 263–283 (AIFI…GAVY), and 290–310 (VIVP…YEWT). N324 carries an N-linked (GlcNAc...) asparagine glycan. The next 6 helical transmembrane spans lie at 330 to 350 (VLGV…FMPI), 368 to 388 (LPLF…LAKF), 393 to 413 (PMHL…SLLD), 420 to 440 (AWAC…AILL), 458 to 478 (VWTF…SAIF), and 532 to 552 (LRTV…LIWL).

Belongs to the major facilitator superfamily.

Its subcellular location is the membrane. Functionally, MFS-type transporter; part of the gene cluster that mediates the biosynthesis of UCS1025A, a member of the pyrrolizidinone family that acts as a strong telomerase inhibitor and displays potent antibacterial and antitumor properties. These compounds share a hemiaminal-containing pyrrolizidinone core fused with a gamma-lactone, giving a furopyrrolizidine that is connected to a decalin fragment. The polypeptide is MFS-type transporter ucsD (Acremonium sp).